Reading from the N-terminus, the 689-residue chain is Probable serine/threonine-protein kinase abkC (689 aa).

The tract at residues 42-79 is disordered; sequence NNSGNENYKNFNYNYKNKNNYNNNNNNNNSNSSSNNNG. The Protein kinase domain maps to 257 to 689; the sequence is WFDEEPMASG…NNKNNNEKNK (433 aa). ATP contacts are provided by residues 263–271 and Lys-285; that span reads MASGSVAQV. The active-site Proton acceptor is Asp-417. The tract at residues 652 to 689 is disordered; it reads KQLNNDNNNNNNNNNNNKNNNDNNNKNNNNKNNNEKNK. The segment covering 655–683 has biased composition (low complexity); that stretch reads NNDNNNNNNNNNNNKNNNDNNNKNNNNKN.

It belongs to the protein kinase superfamily. ADCK protein kinase family.

This chain is Probable serine/threonine-protein kinase abkC (abkC), found in Dictyostelium discoideum (Social amoeba).